The primary structure comprises 317 residues: Beta-ketoacyl-[acyl-carrier-protein] synthase III (317 aa).

Catalysis depends on residues Cys-112 and His-244. The segment at 245 to 249 (QANLR) is ACP-binding. The active site involves Asn-274.

This sequence belongs to the thiolase-like superfamily. FabH family. As to quaternary structure, homodimer.

It is found in the cytoplasm. The catalysed reaction is malonyl-[ACP] + acetyl-CoA + H(+) = 3-oxobutanoyl-[ACP] + CO2 + CoA. It functions in the pathway lipid metabolism; fatty acid biosynthesis. In terms of biological role, catalyzes the condensation reaction of fatty acid synthesis by the addition to an acyl acceptor of two carbons from malonyl-ACP. Catalyzes the first condensation reaction which initiates fatty acid synthesis and may therefore play a role in governing the total rate of fatty acid production. Possesses both acetoacetyl-ACP synthase and acetyl transacylase activities. Its substrate specificity determines the biosynthesis of branched-chain and/or straight-chain of fatty acids. In Baumannia cicadellinicola subsp. Homalodisca coagulata, this protein is Beta-ketoacyl-[acyl-carrier-protein] synthase III.